Here is a 349-residue protein sequence, read N- to C-terminus: Probable sugar phosphate/phosphate translocator At5g25400 (349 aa).

10 helical membrane-spanning segments follow: residues 15-35 (IIIS…VIVY), 49-69 (FPIS…FLLI), 89-109 (VVPI…AYIY), 113-133 (SFIQ…GVLF), 141-161 (ETMM…YGEA), 165-185 (VWGV…LVMI), 205-225 (VAPC…FPIL), 236-256 (LIFG…FLLV), 263-283 (TMNV…WSVI), and 286-306 (TVTP…AYYN). Residues 38-156 (YILDKKMYDW…LSISFGVAIA (119 aa)) enclose the EamA domain. The segment at 321 to 349 (TAQQVDEETGRLLEEREGNEGGRKNEPED) is disordered. Residues 328–349 (ETGRLLEEREGNEGGRKNEPED) are compositionally biased toward basic and acidic residues.

It belongs to the TPT transporter family. TPT (TC 2.A.7.9) subfamily.

It localises to the membrane. The polypeptide is Probable sugar phosphate/phosphate translocator At5g25400 (Arabidopsis thaliana (Mouse-ear cress)).